We begin with the raw amino-acid sequence, 254 residues long: UPF0246 protein CPR_2119 (254 aa).

The protein belongs to the UPF0246 family.

The sequence is that of UPF0246 protein CPR_2119 from Clostridium perfringens (strain SM101 / Type A).